Here is a 133-residue protein sequence, read N- to C-terminus: Ribosome-binding factor A (133 aa).

It belongs to the RbfA family. In terms of assembly, monomer. Binds 30S ribosomal subunits, but not 50S ribosomal subunits or 70S ribosomes.

It is found in the cytoplasm. Functionally, one of several proteins that assist in the late maturation steps of the functional core of the 30S ribosomal subunit. Associates with free 30S ribosomal subunits (but not with 30S subunits that are part of 70S ribosomes or polysomes). Required for efficient processing of 16S rRNA. May interact with the 5'-terminal helix region of 16S rRNA. The polypeptide is Ribosome-binding factor A (Synechocystis sp. (strain ATCC 27184 / PCC 6803 / Kazusa)).